The following is a 111-amino-acid chain: uncharacterized protein (111 aa).

2 consecutive transmembrane segments (helical) span residues 18–38 and 42–62; these read LNVF…LFVS and LALA…RTFP.

It localises to the membrane. This is an uncharacterized protein from Saccharomyces cerevisiae (strain ATCC 204508 / S288c) (Baker's yeast).